A 286-amino-acid chain; its full sequence is 2-hydroxy-6-oxo-6-phenylhexa-2,4-dienoate hydrolase (286 aa).

Substrate contacts are provided by residues 42-43 (GG), Asn-51, Lys-111, Ser-180, and Arg-190. The region spanning 173-271 (NVFLFDQSLI…RCVHWAQWEH (99 aa)) is the AB hydrolase-1 domain. The active-site Proton acceptor is the His-265. Trp-266 serves as a coordination point for substrate.

The protein belongs to the AB hydrolase superfamily. BphD family. Homodimer.

It carries out the reaction 2,6-dioxo-6-phenylhexa-3-enoate + H2O = 2-oxopent-4-enoate + benzoate + H(+). Its pathway is xenobiotic degradation; biphenyl degradation; 2-hydroxy-2,4-pentadienoate and benzoate from biphenyl: step 4/4. Catalyzes an unusual C-C bond hydrolysis of 2-hydroxy-6-oxo-6-phenylhexa-2,4-dienoic acid (HOPDA) to produce benzoic acid and 2-hydroxy-2,4-pentadienoic acid (HPD). This chain is 2-hydroxy-6-oxo-6-phenylhexa-2,4-dienoate hydrolase, found in Delftia acidovorans (Pseudomonas acidovorans).